Reading from the N-terminus, the 239-residue chain is Purine nucleoside phosphorylase DeoD-type (239 aa).

His-5 is a binding site for a purine D-ribonucleoside. The phosphate site is built by Gly-21 and Arg-25. Lys-27 bears the N6-acetyllysine mark. Phosphate is bound by residues Arg-44 and 88 to 91 (RVGS). A purine D-ribonucleoside contacts are provided by residues 180 to 182 (EME) and 204 to 205 (SD). Catalysis depends on Asp-205, which acts as the Proton donor.

This sequence belongs to the PNP/UDP phosphorylase family. As to quaternary structure, homohexamer; trimer of homodimers.

It catalyses the reaction a purine D-ribonucleoside + phosphate = a purine nucleobase + alpha-D-ribose 1-phosphate. The catalysed reaction is a purine 2'-deoxy-D-ribonucleoside + phosphate = a purine nucleobase + 2-deoxy-alpha-D-ribose 1-phosphate. Its function is as follows. Catalyzes the reversible phosphorolytic breakdown of the N-glycosidic bond in the beta-(deoxy)ribonucleoside molecules, with the formation of the corresponding free purine bases and pentose-1-phosphate. The sequence is that of Purine nucleoside phosphorylase DeoD-type from Shigella dysenteriae serotype 1 (strain Sd197).